A 271-amino-acid polypeptide reads, in one-letter code: Glutamate racemase (271 aa).

Substrate contacts are provided by residues aspartate 10–serine 11 and tyrosine 42–glycine 43. Cysteine 73 functions as the Proton donor/acceptor in the catalytic mechanism. Asparagine 74–threonine 75 is a binding site for substrate. Cysteine 183 acts as the Proton donor/acceptor in catalysis. Threonine 184–histidine 185 is a substrate binding site.

This sequence belongs to the aspartate/glutamate racemases family.

It carries out the reaction L-glutamate = D-glutamate. The protein operates within cell wall biogenesis; peptidoglycan biosynthesis. Its function is as follows. Provides the (R)-glutamate required for cell wall biosynthesis. This Streptococcus thermophilus (strain ATCC BAA-250 / LMG 18311) protein is Glutamate racemase.